The following is a 433-amino-acid chain: Phosphomethylpyrimidine synthase (433 aa).

Residues asparagine 69, methionine 98, tyrosine 127, histidine 163, 185 to 187 (SRG), 226 to 229 (DALR), and glutamate 265 each bind substrate. Histidine 269 provides a ligand contact to Zn(2+). Tyrosine 292 lines the substrate pocket. Histidine 333 is a Zn(2+) binding site. 3 residues coordinate [4Fe-4S] cluster: cysteine 409, cysteine 412, and cysteine 416.

This sequence belongs to the ThiC family. Requires [4Fe-4S] cluster as cofactor.

The catalysed reaction is 5-amino-1-(5-phospho-beta-D-ribosyl)imidazole + S-adenosyl-L-methionine = 4-amino-2-methyl-5-(phosphooxymethyl)pyrimidine + CO + 5'-deoxyadenosine + formate + L-methionine + 3 H(+). The protein operates within cofactor biosynthesis; thiamine diphosphate biosynthesis. Its function is as follows. Catalyzes the synthesis of the hydroxymethylpyrimidine phosphate (HMP-P) moiety of thiamine from aminoimidazole ribotide (AIR) in a radical S-adenosyl-L-methionine (SAM)-dependent reaction. The sequence is that of Phosphomethylpyrimidine synthase from Finegoldia magna (strain ATCC 29328 / DSM 20472 / WAL 2508) (Peptostreptococcus magnus).